The sequence spans 60 residues: Large ribosomal subunit protein bL32 (60 aa).

Basic residues predominate over residues 1 to 16 (MAVPKRKTTPSKRGMR). The segment at 1–34 (MAVPKRKTTPSKRGMRRAHDALSSPVYIEDKDSG) is disordered.

Belongs to the bacterial ribosomal protein bL32 family.

The polypeptide is Large ribosomal subunit protein bL32 (Maricaulis maris (strain MCS10) (Caulobacter maris)).